Consider the following 89-residue polypeptide: Small ribosomal subunit protein uS15 (89 aa).

This sequence belongs to the universal ribosomal protein uS15 family. As to quaternary structure, part of the 30S ribosomal subunit. Forms a bridge to the 50S subunit in the 70S ribosome, contacting the 23S rRNA.

Its function is as follows. One of the primary rRNA binding proteins, it binds directly to 16S rRNA where it helps nucleate assembly of the platform of the 30S subunit by binding and bridging several RNA helices of the 16S rRNA. In terms of biological role, forms an intersubunit bridge (bridge B4) with the 23S rRNA of the 50S subunit in the ribosome. This chain is Small ribosomal subunit protein uS15, found in Solibacter usitatus (strain Ellin6076).